Consider the following 309-residue polypeptide: Serine/threonine-protein phosphatase 2A catalytic subunit alpha isoform (309 aa).

4 residues coordinate Mn(2+): aspartate 57, histidine 59, aspartate 85, and asparagine 117. Zn(2+) is bound by residues aspartate 57, histidine 59, and aspartate 85. Aspartate 85 and asparagine 117 together coordinate Fe(3+). The Proton donor role is filled by histidine 118. 2 residues coordinate Mn(2+): histidine 167 and histidine 241. The Fe(3+) site is built by histidine 167 and histidine 241. Tyrosine 307 carries the phosphotyrosine modification. Leucine 309 is subject to Leucine methyl ester.

The protein belongs to the PPP phosphatase family. PP-1 subfamily. As to quaternary structure, PP2A consists of a common heterodimeric core enzyme composed of PPP2CA, a 36 kDa catalytic subunit (subunit C), and PPP2R1A, a 65 kDa constant regulatory subunit (PR65 or subunit A), that associates with a variety of regulatory subunits. Proteins that associate with the core dimer include three families of regulatory subunits B (the R2/B/PR55/B55, R3/B''/PR72/PR130/PR59 and R5/B'/B56 families), the 48 kDa variable regulatory subunit, viral proteins, and cell signaling molecules. Interacts with the PP2A A subunit PPP2R1A. Interacts with the regulatory subunit PPP2R2A. Interacts (via C-terminus) with PTPA. Interacts with NXN; the interaction is direct. Interacts with KCTD20. Interacts with BTBD10. Interacts with SGO1 and SGO2. Interacts with RAF1. Interaction with IGBP1 protects unassembled PPP2CA from degradative ubiquitination. Interacts with GSK3B (via C2 domain). Interacts with MFHAS1; retains PPP2CA into the cytoplasm and excludes it from the nucleus. Interacts with PABIR1/FAM122A. Interacts with ADCY8; interaction is phosphatase activity-dependent; antagonizes interaction between ADCY8 and calmodulin. Interacts with CRTC3 (when phosphorylated at 'Ser-391'). Interacts with SPRY2; the interaction is inhibited by TESK1 interaction with SPRY2, possibly by vesicular sequestration of SPRY2. Interacts with TRAF3IP3. Interacts with AMBRA1 (via PxP motifs); enhancing interaction between PPP2CA and MYC or FOXO3. Forms a complex with AMBRA1 and BECN1; AMBRA1 and BECN1 components of the complex regulate MYC stability via different pathways. Part of the core of STRIPAK complexes composed of PP2A catalytic and scaffolding subunits, the striatins (PP2A regulatory subunits), the striatin-associated proteins MOB4, STRIP1 and STRIP2, PDCD10 and members of the STE20 kinases, such as STK24 and STK26. Phosphatase component of the Integrator-PP2A (INTAC) complex, composed of the Integrator core complex and protein phosphatase 2A subunits PPP2CA and PPP2R1A. Mn(2+) serves as cofactor. The cofactor is Fe(3+). Requires Zn(2+) as cofactor. Reversibly methyl esterified on Leu-309 by leucine carboxyl methyltransferase 1 (Lcmt1) and protein phosphatase methylesterase 1 (Ppme1). Carboxyl methylation influences the affinity of the catalytic subunit for the different regulatory subunits, thereby modulating the PP2A holoenzyme's substrate specificity, enzyme activity and cellular localization. Post-translationally, phosphorylation of either threonine (by autophosphorylation-activated protein kinase) or tyrosine results in inactivation of the phosphatase. Auto-dephosphorylation has been suggested as a mechanism for reactivation. In terms of processing, polyubiquitinated, leading to its degradation by the proteasome.

The protein resides in the cytoplasm. It is found in the nucleus. Its subcellular location is the chromosome. It localises to the centromere. The protein localises to the cytoskeleton. The protein resides in the spindle pole. It catalyses the reaction O-phospho-L-seryl-[protein] + H2O = L-seryl-[protein] + phosphate. It carries out the reaction O-phospho-L-threonyl-[protein] + H2O = L-threonyl-[protein] + phosphate. Its activity is regulated as follows. Inhibited by the interaction between PPP2R2A and ARPP19; this inhibition is enhanced when ARPP19 is phosphorylated. Inhibited by the interaction between PPP2R2A and PABIR1/FAM122A. Its function is as follows. Catalytic subunit of protein phosphatase 2A (PP2A), a serine/threonine phosphatase involved in the regulation of a wide variety of enzymes, signal transduction pathways, and cellular events. PP2A is the major phosphatase for microtubule-associated proteins (MAPs). PP2A can modulate the activity of phosphorylase B kinase casein kinase 2, mitogen-stimulated S6 kinase, and MAP-2 kinase. Cooperates with SGO2 to protect centromeric cohesin from separase-mediated cleavage in oocytes specifically during meiosis I. Can dephosphorylate various proteins, such as AXIN1, p53/TP53, PIM3, WEE1. Activates RAF1 by dephosphorylating it at 'Ser-259'. Mediates dephosphorylation of WEE1, preventing its ubiquitin-mediated proteolysis, increasing WEE1 protein levels, and promoting the G2/M checkpoint. Mediates dephosphorylation of MYC; promoting its ubiquitin-mediated proteolysis: interaction with AMBRA1 enhances interaction between PPP2CA and MYC. Mediates dephosphorylation of FOXO3; promoting its stabilization: interaction with AMBRA1 enhances interaction between PPP2CA and FOXO3. Catalyzes dephosphorylation of the pyrin domain of NLRP3, promoting assembly of the NLRP3 inflammasome. Together with RACK1 adapter, mediates dephosphorylation of AKT1 at 'Ser-473', preventing AKT1 activation and AKT-mTOR signaling pathway. Dephosphorylation of AKT1 is essential for regulatory T-cells (Treg) homeostasis and stability. Catalyzes dephosphorylation of PIM3, promotinh PIM3 ubiquitination and proteasomal degradation. Part of the striatin-interacting phosphatase and kinase (STRIPAK) complexes. STRIPAK complexes have critical roles in protein (de)phosphorylation and are regulators of multiple signaling pathways including Hippo, MAPK, nuclear receptor and cytoskeleton remodeling. Different types of STRIPAK complexes are involved in a variety of biological processes such as cell growth, differentiation, apoptosis, metabolism and immune regulation. Key mediator of a quality checkpoint during transcription elongation as part of the Integrator-PP2A (INTAC) complex. The INTAC complex drives premature transcription termination of transcripts that are unfavorably configured for transcriptional elongation: within the INTAC complex, PPP2CA catalyzes dephosphorylation of the C-terminal domain (CTD) of Pol II subunit POLR2A/RPB1 and SUPT5H/SPT5, thereby preventing transcriptional elongation. The sequence is that of Serine/threonine-protein phosphatase 2A catalytic subunit alpha isoform (Ppp2ca) from Rattus norvegicus (Rat).